An 85-amino-acid chain; its full sequence is Cell division protein ZapA (85 aa).

Residues 60–85 are a coiled coil; that stretch reads AVNVVHDYLKLKEELERLKGQIKEKD.

This sequence belongs to the ZapA family. Type 2 subfamily. In terms of assembly, homodimer. Interacts with FtsZ.

The protein resides in the cytoplasm. In terms of biological role, activator of cell division through the inhibition of FtsZ GTPase activity, therefore promoting FtsZ assembly into bundles of protofilaments necessary for the formation of the division Z ring. It is recruited early at mid-cell but it is not essential for cell division. This chain is Cell division protein ZapA, found in Bacillus licheniformis (strain ATCC 14580 / DSM 13 / JCM 2505 / CCUG 7422 / NBRC 12200 / NCIMB 9375 / NCTC 10341 / NRRL NRS-1264 / Gibson 46).